A 221-amino-acid chain; its full sequence is Ribosomal RNA small subunit methyltransferase G (221 aa).

S-adenosyl-L-methionine contacts are provided by residues G85, F90, 136–137 (AE), and R149.

The protein belongs to the methyltransferase superfamily. RNA methyltransferase RsmG family.

The protein localises to the cytoplasm. In terms of biological role, specifically methylates the N7 position of a guanine in 16S rRNA. The protein is Ribosomal RNA small subunit methyltransferase G of Porphyromonas gingivalis (strain ATCC BAA-308 / W83).